A 555-amino-acid chain; its full sequence is Dihydroxy-acid dehydratase (555 aa).

D78 provides a ligand contact to Mg(2+). Residue C119 coordinates [2Fe-2S] cluster. Positions 120 and 121 each coordinate Mg(2+). K121 is subject to N6-carboxylysine. C191 serves as a coordination point for [2Fe-2S] cluster. Mg(2+) is bound at residue E444. S470 (proton acceptor) is an active-site residue.

Belongs to the IlvD/Edd family. In terms of assembly, homodimer. The cofactor is [2Fe-2S] cluster. Mg(2+) serves as cofactor.

It carries out the reaction (2R)-2,3-dihydroxy-3-methylbutanoate = 3-methyl-2-oxobutanoate + H2O. The catalysed reaction is (2R,3R)-2,3-dihydroxy-3-methylpentanoate = (S)-3-methyl-2-oxopentanoate + H2O. Its pathway is amino-acid biosynthesis; L-isoleucine biosynthesis; L-isoleucine from 2-oxobutanoate: step 3/4. It functions in the pathway amino-acid biosynthesis; L-valine biosynthesis; L-valine from pyruvate: step 3/4. In terms of biological role, functions in the biosynthesis of branched-chain amino acids. Catalyzes the dehydration of (2R,3R)-2,3-dihydroxy-3-methylpentanoate (2,3-dihydroxy-3-methylvalerate) into 2-oxo-3-methylpentanoate (2-oxo-3-methylvalerate) and of (2R)-2,3-dihydroxy-3-methylbutanoate (2,3-dihydroxyisovalerate) into 2-oxo-3-methylbutanoate (2-oxoisovalerate), the penultimate precursor to L-isoleucine and L-valine, respectively. The sequence is that of Dihydroxy-acid dehydratase from Oleidesulfovibrio alaskensis (strain ATCC BAA-1058 / DSM 17464 / G20) (Desulfovibrio alaskensis).